The chain runs to 797 residues: LPS-assembly protein LptD (797 aa).

Residues Met-1–Ala-30 form the signal peptide.

Belongs to the LptD family. As to quaternary structure, component of the lipopolysaccharide transport and assembly complex. Interacts with LptE and LptA.

It is found in the cell outer membrane. Functionally, together with LptE, is involved in the assembly of lipopolysaccharide (LPS) at the surface of the outer membrane. The polypeptide is LPS-assembly protein LptD (Hahella chejuensis (strain KCTC 2396)).